Here is a 418-residue protein sequence, read N- to C-terminus: Pyrophosphate--fructose 6-phosphate 1-phosphotransferase (418 aa).

Glycine 13 contributes to the diphosphate binding site. Asparagine 111 is a binding site for Mg(2+). Substrate is bound by residues 139–141, 187–189, glutamate 244, and 295–298; these read TID, MGR, and YLQR. Residue aspartate 141 is the Proton acceptor of the active site.

This sequence belongs to the phosphofructokinase type A (PFKA) family. PPi-dependent PFK group II subfamily. Clade 'B2' sub-subfamily. In terms of assembly, homodimer. Mg(2+) serves as cofactor.

The protein resides in the cytoplasm. It catalyses the reaction beta-D-fructose 6-phosphate + diphosphate = beta-D-fructose 1,6-bisphosphate + phosphate + H(+). It functions in the pathway carbohydrate degradation; glycolysis; D-glyceraldehyde 3-phosphate and glycerone phosphate from D-glucose: step 3/4. Non-allosteric. Catalyzes the phosphorylation of D-fructose 6-phosphate, the first committing step of glycolysis. Uses inorganic phosphate (PPi) as phosphoryl donor instead of ATP like common ATP-dependent phosphofructokinases (ATP-PFKs), which renders the reaction reversible, and can thus function both in glycolysis and gluconeogenesis. Consistently, PPi-PFK can replace the enzymes of both the forward (ATP-PFK) and reverse (fructose-bisphosphatase (FBPase)) reactions. This Xanthomonas campestris pv. campestris (strain B100) protein is Pyrophosphate--fructose 6-phosphate 1-phosphotransferase.